Here is a 64-residue protein sequence, read N- to C-terminus: Large ribosomal subunit protein bL35 (64 aa).

Basic residues-rich tracts occupy residues 1–26 (MPKM…KRSK) and 33–44 (LTKKSPKRKRKL). Positions 1 to 44 (MPKMKTHRGAAKRFKKTGTGKIKRSKAYTSHILTKKSPKRKRKL) are disordered.

The protein belongs to the bacterial ribosomal protein bL35 family.

This Alkaliphilus oremlandii (strain OhILAs) (Clostridium oremlandii (strain OhILAs)) protein is Large ribosomal subunit protein bL35.